A 178-amino-acid chain; its full sequence is Large ribosomal subunit protein bL25 (178 aa).

The protein belongs to the bacterial ribosomal protein bL25 family. CTC subfamily. Part of the 50S ribosomal subunit; part of the 5S rRNA/L5/L18/L25 subcomplex. Contacts the 5S rRNA. Binds to the 5S rRNA independently of L5 and L18.

In terms of biological role, this is one of the proteins that binds to the 5S RNA in the ribosome where it forms part of the central protuberance. The sequence is that of Large ribosomal subunit protein bL25 from Campylobacter jejuni subsp. jejuni serotype O:23/36 (strain 81-176).